The chain runs to 505 residues: Maturase K (505 aa).

Belongs to the intron maturase 2 family. MatK subfamily.

It is found in the plastid. Its subcellular location is the chloroplast. In terms of biological role, usually encoded in the trnK tRNA gene intron. Probably assists in splicing its own and other chloroplast group II introns. This Nuphar advena (Common spatterdock) protein is Maturase K.